The following is a 616-amino-acid chain: MPKYRSATTTHGRNMAGARALWRATGMTDDDFGKPIIAVVNSFTQFVPGHVHLRDLGKLVAEEIEASGGVAKEFNTIAVDDGIAMGHGGMLYSLPSRELIADSVEYMVNAHCADAMVCISNCDKITPGMLMASLRLNIPVIFVSGGPMEAGKTKLSDKIIKLDLVDAMIQGANPNVSDADSDQIERSACPTCGSCSGMFTANSMNCLTEALGLSQPGNGSLLATHADRRELFLNAGRRIVALTKRYYEQDDESALPRNIASKAAFENAMTLDIAMGGSTNTVLHLLAAAQEGEIDFDISDIDRLSRLVPHLCKVAPSTPKYHMEDVHRAGGVLGILGELDRAGLMDNSVRNILGLSLRETLDRYDIMLTQDDAVKKMFRAGPAGIRTTQAFSQDTRWETLDDDRQHGCIRAREFAFSQDGGLAVLYGNLAENGCIVKTAGVDEGSLVFSGPAKVYESQDDAVAAILGGKVVAGDVVVIRYEGPKGGPGMQEMLYPTTYLKSMGLGKACALITDGRFSGGTSGLSIGHASPEAASGGTIALVKDGDIINIDIPQRGIQLDVAENELAARRLEEDARGEAAYTPHGRERQVSFALRAYATLATSADKGAVRDKSKLGG.

Residue Asp81 participates in Mg(2+) binding. A [2Fe-2S] cluster-binding site is contributed by Cys122. Positions 123 and 124 each coordinate Mg(2+). Lys124 carries the N6-carboxylysine modification. Cys195 lines the [2Fe-2S] cluster pocket. Glu491 contacts Mg(2+). The Proton acceptor role is filled by Ser517.

This sequence belongs to the IlvD/Edd family. In terms of assembly, homodimer. [2Fe-2S] cluster is required as a cofactor. Mg(2+) serves as cofactor.

It catalyses the reaction (2R)-2,3-dihydroxy-3-methylbutanoate = 3-methyl-2-oxobutanoate + H2O. It carries out the reaction (2R,3R)-2,3-dihydroxy-3-methylpentanoate = (S)-3-methyl-2-oxopentanoate + H2O. Its pathway is amino-acid biosynthesis; L-isoleucine biosynthesis; L-isoleucine from 2-oxobutanoate: step 3/4. The protein operates within amino-acid biosynthesis; L-valine biosynthesis; L-valine from pyruvate: step 3/4. Functionally, functions in the biosynthesis of branched-chain amino acids. Catalyzes the dehydration of (2R,3R)-2,3-dihydroxy-3-methylpentanoate (2,3-dihydroxy-3-methylvalerate) into 2-oxo-3-methylpentanoate (2-oxo-3-methylvalerate) and of (2R)-2,3-dihydroxy-3-methylbutanoate (2,3-dihydroxyisovalerate) into 2-oxo-3-methylbutanoate (2-oxoisovalerate), the penultimate precursor to L-isoleucine and L-valine, respectively. The sequence is that of Dihydroxy-acid dehydratase from Erwinia tasmaniensis (strain DSM 17950 / CFBP 7177 / CIP 109463 / NCPPB 4357 / Et1/99).